A 133-amino-acid chain; its full sequence is Minor spike protein H (133 aa).

Belongs to the microviridae H protein family.

It localises to the virion. Its function is as follows. Probably triggers with protein G the injection of the phage DNA into the host upon conformational changes induced by virus-host receptor interaction. In Spiroplasma virus 4 (SpV4), this protein is Minor spike protein H.